We begin with the raw amino-acid sequence, 180 residues long: UPF0227 protein YcfP (180 aa).

It belongs to the UPF0227 family.

This chain is UPF0227 protein YcfP, found in Salmonella agona (strain SL483).